The following is a 276-amino-acid chain: Putative metal-binding protein TC_0696 (276 aa).

Positions 1 to 18 (MRLLILLLFSFGIIYSHG) are cleaved as a signal peptide. A divalent metal cation is bound by residues histidine 59, histidine 121, histidine 185, and aspartate 256.

It belongs to the bacterial solute-binding protein 9 family.

The protein resides in the periplasm. Functionally, part of an ATP-binding cassette (ABC) transport system involved in metal import. Binds a metal with high affinity and specificity and delivers it to the membrane permease for translocation into the cytoplasm. This Chlamydia muridarum (strain MoPn / Nigg) protein is Putative metal-binding protein TC_0696.